The chain runs to 305 residues: DNA-directed RNA polymerase 35 kDa subunit (305 aa).

It belongs to the poxviridae DNA-directed RNA polymerase 35 kDa subunit family. The DNA-dependent RNA polymerase used for intermediate and late genes expression consists of eight subunits 147 kDa, 133 kDa, 35 kDa, 30 kDa, 22 kDa, 19 kDa, 18 kDa and 7 kDa totalling more than 500 kDa in mass. The same holoenzyme, with the addition of the transcription-specificity factor RAP94, is used for early gene expression.

It is found in the virion. It catalyses the reaction RNA(n) + a ribonucleoside 5'-triphosphate = RNA(n+1) + diphosphate. Its function is as follows. Part of the DNA-dependent RNA polymerase which catalyzes the transcription of viral DNA into RNA using the four ribonucleoside triphosphates as substrates. Responsible for the transcription of early, intermediate and late genes. DNA-dependent RNA polymerase associates with the early transcription factor (ETF), itself composed of D6 and A7, thereby allowing the early genes transcription. Late transcription, and probably also intermediate transcription, require newly synthesized RNA polymerase. The polypeptide is DNA-directed RNA polymerase 35 kDa subunit (OPG156) (Cynomys gunnisoni (Gunnison's prairie dog)).